The chain runs to 664 residues: DNA topoisomerase 4 subunit B (664 aa).

Residues Tyr7, Asn47, Asp74, 114–120, and Lys341 each bind ATP; that span reads GLHGVGA. The tract at residues 386–418 is disordered; sequence REAARKAREDARSGKKNKRKDTLLSGKLTPAQS. Over residues 387 to 398 the composition is skewed to basic and acidic residues; sequence EAARKAREDARS. The Toprim domain occupies 424-538; sequence NELYLVEGDS…AGRVFIALPP (115 aa). Residues Glu430, Asp503, and Asp505 each coordinate Mg(2+).

The protein belongs to the type II topoisomerase family. ParE type 2 subfamily. In terms of assembly, heterotetramer composed of ParC and ParE. Requires Mg(2+) as cofactor. The cofactor is Mn(2+). Ca(2+) is required as a cofactor.

It catalyses the reaction ATP-dependent breakage, passage and rejoining of double-stranded DNA.. Functionally, topoisomerase IV is essential for chromosome segregation. It relaxes supercoiled DNA. Performs the decatenation events required during the replication of a circular DNA molecule. This Staphylococcus epidermidis (strain ATCC 35984 / DSM 28319 / BCRC 17069 / CCUG 31568 / BM 3577 / RP62A) protein is DNA topoisomerase 4 subunit B.